We begin with the raw amino-acid sequence, 183 residues long: Ribosome rescue factor SmrB (183 aa).

Residues 98 to 173 (LDLHGLTQLQ…GDAALLVLIE (76 aa)) form the Smr domain.

This sequence belongs to the SmrB family. In terms of assembly, associates with collided ribosomes, but not with correctly translating polysomes.

In terms of biological role, acts as a ribosome collision sensor. Detects stalled/collided disomes (pairs of ribosomes where the leading ribosome is stalled and a second ribosome has collided with it) and endonucleolytically cleaves mRNA at the 5' boundary of the stalled ribosome. Stalled/collided disomes form a new interface (primarily via the 30S subunits) that binds SmrB. Cleaved mRNA becomes available for tmRNA ligation, leading to ribosomal subunit dissociation and rescue of stalled ribosomes. The protein is Ribosome rescue factor SmrB of Shigella sonnei (strain Ss046).